Consider the following 211-residue polypeptide: Riboflavin kinase (211 aa).

The segment at 1–85 is H-T-H motif-like; that stretch reads MKKILMLIEL…CDKISNALSK (85 aa). The riboflavin kinase stretch occupies residues 86 to 211; it reads GVIVGEVVSG…GDRVRLEVIQ (126 aa). Residue 95-100 participates in CDP binding; it reads GLGEGA. Mg(2+)-binding residues include Thr-122 and Asn-124. Thr-178 and Glu-186 together coordinate FMN. 191 to 194 provides a ligand contact to CDP; the sequence is VNLR.

It belongs to the archaeal riboflavin kinase family. Mg(2+) serves as cofactor.

It carries out the reaction riboflavin + CTP = CDP + FMN + H(+). It participates in cofactor biosynthesis; FMN biosynthesis; FMN from riboflavin (CTP route): step 1/1. Functionally, catalyzes the CTP-dependent phosphorylation of riboflavin (vitamin B2) to form flavin mononucleotide (FMN). The sequence is that of Riboflavin kinase (ribK) from Thermococcus kodakarensis (strain ATCC BAA-918 / JCM 12380 / KOD1) (Pyrococcus kodakaraensis (strain KOD1)).